The sequence spans 131 residues: Heat shock protein 15 homolog (131 aa).

Positions 6–67 constitute an S4 RNA-binding domain; the sequence is VRLDKWLWAA…NEEKEIKIIA (62 aa). Residues 98 to 131 are disordered; sequence ARKNNSLSMPHPDRRPNKKERRDLLKFKHQDKFE. Residues 108 to 131 show a composition bias toward basic and acidic residues; sequence HPDRRPNKKERRDLLKFKHQDKFE.

It belongs to the HSP15 family.

In terms of biological role, involved in the recycling of free 50S ribosomal subunits that still carry a nascent chain. Binds RNA more specifically than DNA. Binds with very high affinity to the free 50S ribosomal subunit. Does not bind it when it is part of the 70S ribosome. The sequence is that of Heat shock protein 15 homolog (hslR) from Haemophilus influenzae (strain ATCC 51907 / DSM 11121 / KW20 / Rd).